The following is a 191-amino-acid chain: Orotate phosphoribosyltransferase (191 aa).

Residue 114-122 (EDVVTTGKS) participates in 5-phospho-alpha-D-ribose 1-diphosphate binding. Orotate-binding residues include Thr-118 and Arg-146.

It belongs to the purine/pyrimidine phosphoribosyltransferase family. PyrE subfamily. Homodimer. It depends on Mg(2+) as a cofactor.

It carries out the reaction orotidine 5'-phosphate + diphosphate = orotate + 5-phospho-alpha-D-ribose 1-diphosphate. It participates in pyrimidine metabolism; UMP biosynthesis via de novo pathway; UMP from orotate: step 1/2. Catalyzes the transfer of a ribosyl phosphate group from 5-phosphoribose 1-diphosphate to orotate, leading to the formation of orotidine monophosphate (OMP). The protein is Orotate phosphoribosyltransferase of Clostridium botulinum (strain ATCC 19397 / Type A).